A 64-amino-acid polypeptide reads, in one-letter code: Large ribosomal subunit protein uL29 (64 aa).

Belongs to the universal ribosomal protein uL29 family.

This Pseudomonas entomophila (strain L48) protein is Large ribosomal subunit protein uL29.